A 119-amino-acid chain; its full sequence is Thrombin-like enzyme TLBan (119 aa).

The 112-residue stretch at 1–112 folds into the Peptidase S1 domain; sequence VIGGDECNIN…YLLWIQSIIA (112 aa). Active-site charge relay system residues include histidine 40 and aspartate 59. Residues cysteine 54 and cysteine 118 are joined by a disulfide bond.

Monomer. In terms of processing, contains both N-linked carbohydrates and sialic acid. In terms of tissue distribution, expressed by the venom gland.

Its subcellular location is the secreted. Strongly inhibited by PMSF and slightly inhibited by EDTA and soybean trypsin inhibitor. Functionally, thrombin-like snake venom serine protease, with high clotting activity in vitro. Also has fibrinogenolytic ability, showing a fast degradation of fibrinogen Aalpha chain (FGA), a slow degradation of Bbeta chain (FGB) and no degradation of gamma chain. Also causes platelet aggregation in platelet rich plasma (PRP) and washed platelet suspension. This is Thrombin-like enzyme TLBan from Bothrocophias andianus (Andean lancehead).